The following is a 232-amino-acid chain: 2-C-methyl-D-erythritol 4-phosphate cytidylyltransferase (232 aa).

The protein belongs to the IspD/TarI cytidylyltransferase family. IspD subfamily.

It carries out the reaction 2-C-methyl-D-erythritol 4-phosphate + CTP + H(+) = 4-CDP-2-C-methyl-D-erythritol + diphosphate. It functions in the pathway isoprenoid biosynthesis; isopentenyl diphosphate biosynthesis via DXP pathway; isopentenyl diphosphate from 1-deoxy-D-xylulose 5-phosphate: step 2/6. In terms of biological role, catalyzes the formation of 4-diphosphocytidyl-2-C-methyl-D-erythritol from CTP and 2-C-methyl-D-erythritol 4-phosphate (MEP). The sequence is that of 2-C-methyl-D-erythritol 4-phosphate cytidylyltransferase from Bacillus velezensis (strain DSM 23117 / BGSC 10A6 / LMG 26770 / FZB42) (Bacillus amyloliquefaciens subsp. plantarum).